Reading from the N-terminus, the 98-residue chain is Citrate lyase acyl carrier protein (98 aa).

Residue Ser-14 is modified to O-(phosphoribosyl dephospho-coenzyme A)serine.

The protein belongs to the CitD family. In terms of assembly, oligomer with a subunit composition of (alpha,beta,gamma)6.

The protein resides in the cytoplasm. Functionally, covalent carrier of the coenzyme of citrate lyase. The polypeptide is Citrate lyase acyl carrier protein (Albidiferax ferrireducens (strain ATCC BAA-621 / DSM 15236 / T118) (Rhodoferax ferrireducens)).